The sequence spans 311 residues: Terpentetriene synthase (311 aa).

The DDXXD motif signature appears at 77 to 81; it reads DDRWD.

Belongs to the terpene synthase family. In terms of assembly, homodimer. Requires Mg(2+) as cofactor.

The catalysed reaction is terpentedienyl diphosphate = terpentetriene + diphosphate. It functions in the pathway antibiotic biosynthesis. Involved in the production of the isoprenoid antibiotic terpentecin. Converts terpentedienol diphosphate (TDP) into terpentetriene (TTE). Can also accept geranylgeranyl diphosphate (GGDP) and farnesyl diphosphate (FDP) as substrates. The sequence is that of Terpentetriene synthase (cyc2) from Kitasatospora griseola (Streptomyces griseolosporeus).